We begin with the raw amino-acid sequence, 187 residues long: Large ribosomal subunit protein uL6 (187 aa).

It belongs to the universal ribosomal protein uL6 family. As to quaternary structure, part of the 50S ribosomal subunit.

This protein binds to the 23S rRNA, and is important in its secondary structure. It is located near the subunit interface in the base of the L7/L12 stalk, and near the tRNA binding site of the peptidyltransferase center. The polypeptide is Large ribosomal subunit protein uL6 (Roseiflexus sp. (strain RS-1)).